The primary structure comprises 256 residues: Protein CUSTOS (256 aa).

Over residues 1–19 (MVAPSGAMSDSENSSSSSS) the composition is skewed to low complexity. 3 disordered regions span residues 1 to 83 (MVAP…TPEF), 127 to 163 (FTSIPGGHKKEASPRPCRKRQPPSSSEDSDEELQRCR), and 227 to 256 (IQKKRKKKAKKSREAPLCPPAECAAAKPEN). Ser-62 is subject to Phosphoserine. The span at 63 to 83 (RRHEVNQHEEDGNDLRTTPEF) shows a compositional bias: basic and acidic residues. Thr-80 carries the post-translational modification Phosphothreonine. At Ser-139 the chain carries Phosphoserine. The Nucleolar localization signal (NLS) motif lies at 228–235 (QKKRKKKA). Positions 228 to 237 (QKKRKKKAKK) are enriched in basic residues. Residues 246–256 (PAECAAAKPEN) show a composition bias toward low complexity.

The protein belongs to the CUSTOS family.

The protein localises to the nucleus envelope. Functionally, plays a role in the regulation of Wnt signaling pathway during early development. The polypeptide is Protein CUSTOS (Mus musculus (Mouse)).